The following is a 1406-amino-acid chain: EF-hand calcium-binding domain-containing protein 5 (1406 aa).

The disordered stretch occupies residues 255-655 (NKDLPQQQRD…KACEPKPQHV (401 aa)). 8 stretches are compositionally biased toward polar residues: residues 258–294 (LPQQ…SLTG), 322–334 (RRSS…QQRG), 342–354 (RRSS…QQRG), 362–373 (RRSSTVEQTRQR), 382–393 (RRSSTVEQTQRR), 402–414 (RRSS…QQRG), 422–434 (RRSS…QQRG), and 442–464 (RRSS…SLPE). The span at 465 to 477 (QESHRGSITEGSH) shows a compositional bias: basic and acidic residues. Residues 501 to 513 (DDSGSAGSRRGSG) are compositionally biased toward low complexity. Acidic residues predominate over residues 564–577 (QELDEDSTPQLEDD). 2 stretches are compositionally biased toward basic and acidic residues: residues 578-598 (SALK…EEKP) and 638-655 (SKRD…PQHV). In terms of domain architecture, EF-hand spans 773–808 (RRRILLQAIFEKWDNDGSGFLDLNEVDDLLYTYKEG). 4 residues coordinate Ca(2+): Asp786, Asp788, Ser790, and Glu797.

The chain is EF-hand calcium-binding domain-containing protein 5 (Efcab5) from Mus musculus (Mouse).